The sequence spans 348 residues: Eukaryotic translation initiation factor 3 subunit I (348 aa).

WD repeat units follow at residues 8–49 (GHER…GTFE), 51–91 (HMGT…YTYE), 93–135 (PTPV…PKNQ), 147–186 (DGAK…FIDS), 196–238 (EKIH…KVYK), and 294–333 (GHFG…YDFE).

This sequence belongs to the eIF-3 subunit I family. As to quaternary structure, component of the eukaryotic translation initiation factor 3 (eIF-3) complex.

It localises to the cytoplasm. Its function is as follows. Component of the eukaryotic translation initiation factor 3 (eIF-3) complex, which is involved in protein synthesis of a specialized repertoire of mRNAs and, together with other initiation factors, stimulates binding of mRNA and methionyl-tRNAi to the 40S ribosome. The eIF-3 complex specifically targets and initiates translation of a subset of mRNAs involved in cell proliferation. The chain is Eukaryotic translation initiation factor 3 subunit I from Meyerozyma guilliermondii (strain ATCC 6260 / CBS 566 / DSM 6381 / JCM 1539 / NBRC 10279 / NRRL Y-324) (Yeast).